The sequence spans 241 residues: 1-(5-phosphoribosyl)-5-[(5-phosphoribosylamino)methylideneamino] imidazole-4-carboxamide isomerase (241 aa).

Residue D8 is the Proton acceptor of the active site. The Proton donor role is filled by D130.

The protein belongs to the HisA/HisF family.

The protein localises to the cytoplasm. The enzyme catalyses 1-(5-phospho-beta-D-ribosyl)-5-[(5-phospho-beta-D-ribosylamino)methylideneamino]imidazole-4-carboxamide = 5-[(5-phospho-1-deoxy-D-ribulos-1-ylimino)methylamino]-1-(5-phospho-beta-D-ribosyl)imidazole-4-carboxamide. Its pathway is amino-acid biosynthesis; L-histidine biosynthesis; L-histidine from 5-phospho-alpha-D-ribose 1-diphosphate: step 4/9. In Leptospira interrogans serogroup Icterohaemorrhagiae serovar copenhageni (strain Fiocruz L1-130), this protein is 1-(5-phosphoribosyl)-5-[(5-phosphoribosylamino)methylideneamino] imidazole-4-carboxamide isomerase.